The chain runs to 124 residues: NADH-quinone oxidoreductase subunit K (124 aa).

The next 3 helical transmembrane spans lie at 28-48 (MEHGLILAAIIFAIGLCGVMV), 52-72 (FLFMLMSLEIMMSAAGLAFIV), and 84-104 (IMFIFILTLAAAEASLGLAIL).

Belongs to the complex I subunit 4L family. In terms of assembly, NDH-1 is composed of 14 different subunits. Subunits NuoA, H, J, K, L, M, N constitute the membrane sector of the complex.

It localises to the cell inner membrane. It carries out the reaction a quinone + NADH + 5 H(+)(in) = a quinol + NAD(+) + 4 H(+)(out). In terms of biological role, NDH-1 shuttles electrons from NADH, via FMN and iron-sulfur (Fe-S) centers, to quinones in the respiratory chain. The immediate electron acceptor for the enzyme in this species is believed to be ubiquinone. Couples the redox reaction to proton translocation (for every two electrons transferred, four hydrogen ions are translocated across the cytoplasmic membrane), and thus conserves the redox energy in a proton gradient. The polypeptide is NADH-quinone oxidoreductase subunit K (Psychrobacter sp. (strain PRwf-1)).